The sequence spans 211 residues: Claudin-7 (211 aa).

Over 1 to 7 (MANSGLQ) the chain is Cytoplasmic. Residues 8 to 28 (LLGFSMALLGWVGLVACTAIP) traverse the membrane as a helical segment. At 29-81 (QWQMSSYAGDNIITAQAMYKGLWMDCVTQSTGMMSCKMYDSVLALSAALQATR) the chain is on the extracellular side. A helical transmembrane segment spans residues 82 to 102 (ALMVVSLVLGFLAMFVATMGM). The Cytoplasmic portion of the chain corresponds to 103 to 117 (KCTRCGGDDKVKKAR). Residues 118–138 (IAMGGGIIFIVAGLAALVACS) traverse the membrane as a helical segment. The Extracellular portion of the chain corresponds to 139–160 (WYGHQIVTDFYNPLIPTNIKYE). Residues 161-181 (FGPAIFIGWAGSALVILGGAL) traverse the membrane as a helical segment. Over 182–211 (LSCSCPGNESKAGYRVPRSYPKSNSSKEYV) the chain is Cytoplasmic. The tract at residues 210 to 211 (YV) is interactions with TJP1, TJP2 and TJP3.

Belongs to the claudin family. Directly interacts with TJP1/ZO-1, TJP2/ZO-2 and TJP3/ZO-3. The phosphorylated form interacts with EPCAM. Does not interact with CD81. In terms of processing, phosphorylated. Expressed in kidney, lung and prostate. Isoform 1 seems to be predominant, except in some normal prostate samples, where isoform 2 is the major form. Down-regulated in breast cancers, including ductal carcinoma in situ (DCIS), lobular carcinoma in situ (LCIS) and invasive ductal carcinoma (IDC) (at protein level), as well as in several cancer cell lines. Loss of expression correlates with histological grade, occurring predominantly in high-grade lesions.

Its subcellular location is the cell membrane. The protein resides in the basolateral cell membrane. It localises to the cell junction. It is found in the tight junction. Plays a major role in tight junction-specific obliteration of the intercellular space. The sequence is that of Claudin-7 (CLDN7) from Homo sapiens (Human).